Consider the following 356-residue polypeptide: UDP-N-acetylglucosamine--N-acetylmuramyl-(pentapeptide) pyrophosphoryl-undecaprenol N-acetylglucosamine transferase (356 aa).

UDP-N-acetyl-alpha-D-glucosamine is bound by residues 15-17 (TGG), asparagine 127, arginine 163, serine 191, isoleucine 244, 263-268 (ALTVSE), and glutamine 288.

The protein belongs to the glycosyltransferase 28 family. MurG subfamily.

It localises to the cell inner membrane. The catalysed reaction is di-trans,octa-cis-undecaprenyl diphospho-N-acetyl-alpha-D-muramoyl-L-alanyl-D-glutamyl-meso-2,6-diaminopimeloyl-D-alanyl-D-alanine + UDP-N-acetyl-alpha-D-glucosamine = di-trans,octa-cis-undecaprenyl diphospho-[N-acetyl-alpha-D-glucosaminyl-(1-&gt;4)]-N-acetyl-alpha-D-muramoyl-L-alanyl-D-glutamyl-meso-2,6-diaminopimeloyl-D-alanyl-D-alanine + UDP + H(+). It functions in the pathway cell wall biogenesis; peptidoglycan biosynthesis. In terms of biological role, cell wall formation. Catalyzes the transfer of a GlcNAc subunit on undecaprenyl-pyrophosphoryl-MurNAc-pentapeptide (lipid intermediate I) to form undecaprenyl-pyrophosphoryl-MurNAc-(pentapeptide)GlcNAc (lipid intermediate II). This is UDP-N-acetylglucosamine--N-acetylmuramyl-(pentapeptide) pyrophosphoryl-undecaprenol N-acetylglucosamine transferase from Klebsiella pneumoniae (strain 342).